The sequence spans 311 residues: Aspartate carbamoyltransferase catalytic subunit (311 aa).

The carbamoyl phosphate site is built by arginine 55 and threonine 56. Lysine 83 lines the L-aspartate pocket. Positions 105, 134, and 137 each coordinate carbamoyl phosphate. L-aspartate is bound by residues arginine 167 and arginine 226. Carbamoyl phosphate is bound by residues glycine 267 and proline 268.

The protein belongs to the aspartate/ornithine carbamoyltransferase superfamily. ATCase family. In terms of assembly, heterododecamer (2C3:3R2) of six catalytic PyrB chains organized as two trimers (C3), and six regulatory PyrI chains organized as three dimers (R2).

It carries out the reaction carbamoyl phosphate + L-aspartate = N-carbamoyl-L-aspartate + phosphate + H(+). It participates in pyrimidine metabolism; UMP biosynthesis via de novo pathway; (S)-dihydroorotate from bicarbonate: step 2/3. Functionally, catalyzes the condensation of carbamoyl phosphate and aspartate to form carbamoyl aspartate and inorganic phosphate, the committed step in the de novo pyrimidine nucleotide biosynthesis pathway. The polypeptide is Aspartate carbamoyltransferase catalytic subunit (Corynebacterium jeikeium (strain K411)).